Here is a 530-residue protein sequence, read N- to C-terminus: Cilia- and flagella-associated protein 97 (530 aa).

Phosphoserine is present on S19. Disordered stretches follow at residues 29–83 (TNSV…PVEN) and 116–258 (IPNR…LSTP). The span at 35-49 (KQNDDPKERIDKDTK) shows a compositional bias: basic and acidic residues. The span at 50–63 (NVNSNTGMQTTENY) shows a compositional bias: polar residues. Positions 67–82 (KGNERNVKFPPEHPVE) are enriched in basic and acidic residues. Residues 129–139 (GDYYTDGEESS) show a composition bias toward acidic residues. Position 133 is a phosphothreonine (T133). Residues S138 and S139 each carry the phosphoserine modification. Residues 170–203 (SSSSSSSLSSSSSGSGTDCLDGGSDSHLSDSSPS) are compositionally biased toward low complexity. The residue at position 215 (S215) is a Phosphoserine. Over residues 227 to 236 (TETQPSSTTP) the composition is skewed to polar residues. A phosphoserine mark is found at S245 and S327. Positions 372–447 (KNYSFTREEV…ALLKRLEAVK (76 aa)) form a coiled coil. Disordered regions lie at residues 395–417 (LSRQ…HPPK) and 483–530 (QYSP…TAWL). Polar residues predominate over residues 491–501 (SRTSSATSGLS).

This sequence belongs to the CFAP97 family.

This Pongo abelii (Sumatran orangutan) protein is Cilia- and flagella-associated protein 97.